We begin with the raw amino-acid sequence, 321 residues long: Methyltransferase cfoB (321 aa).

Belongs to the methyltransferase superfamily.

It functions in the pathway secondary metabolite biosynthesis; flavonoid biosynthesis. Methyltransferase; part of the gene cluster that mediates the biosynthesis of chlorflavonin, a fungal flavonoid with acetolactate synthase inhibitory activity. Within the pathway, cfoB is responsible for the methylation at position C7-OH of flavonoid. The pathway begins with the PKS-NRPS hybrid synthetase cfoA that uses benzoic acid or p-hydroxybenzoic acid as a starter unit with four rounds of chain elongation using malonyl-CoA to form the chalcone skeleton. Then, a new type of chalcone isomerase, cfoK, catalyzes the conversion of the chalcone into a flavanone by a histidine-mediated oxa-Michael addition mechanism. The desaturation of flavanone to flavone is catalyzed by a new type of flavone synthase, the flavin mononucleotide (FMN)-dependent oxidoreductase cfoJ. Monooxygenases cfoF, cfoG, and P450 cfoH are responsible for the hydroxylation of the flavonoid skeleton at sites C3, C8, and C2', respectively. Like cfoF, the dehydratase cfoI also plays a role in the hydroxylation of position C3. Methyltransferases cfoB, cfoC, and cfoD then catalyze the methylation of C7-OH, C8-OH, and C3-OH, respectively. Finally, the monooxygenase cfoE is responsible for the chlorination of flavonoid at position C3'. The chain is Methyltransferase cfoB from Aspergillus candidus.